The primary structure comprises 83 residues: Putative defensin-like protein 66 (83 aa).

The signal sequence occupies residues 1 to 22; the sequence is MGSSRLMITFIVVAMLAISSDL. 4 cysteine pairs are disulfide-bonded: cysteine 38–cysteine 82, cysteine 42–cysteine 65, cysteine 51–cysteine 80, and cysteine 55–cysteine 81.

This sequence belongs to the DEFL family.

The protein resides in the secreted. This Arabidopsis thaliana (Mouse-ear cress) protein is Putative defensin-like protein 66.